A 369-amino-acid polypeptide reads, in one-letter code: IST1-like protein (369 aa).

Residues 12-59 (KLKVQLKLAVSRIQILKNKKANIVRDEKRNVAELLRKKNEESARIRVE) are a coiled coil. The segment at 224–354 (QIIQQQQQPQ…SSDTGYPDYD (131 aa)) is disordered. Low complexity-rich tracts occupy residues 225 to 239 (IIQQ…SFPI) and 246 to 270 (PTFS…SPQF). Residues 277–305 (FYNNNSGNQTPQFPTISTNNSDGYSNDKF) show a composition bias toward polar residues. Low complexity predominate over residues 306-337 (NNGNNNYNNNNNNNNNNNNNNNHNNNNNNNNN).

Belongs to the IST1 family.

In Dictyostelium discoideum (Social amoeba), this protein is IST1-like protein.